The following is a 117-amino-acid chain: Minor capsid protein VP2 (117 aa).

Belongs to the lagovirus VP2 protein family. As to quaternary structure, homooligomer. The portal-like structure consists in 12 copies of VP2. Interacts with capsid protein VP1.

It localises to the virion. The protein resides in the host cytoplasm. Functionally, minor structural protein that forms a portal-like structure at a unique three-fold axis of symmetry, following binding to the host receptor. The channel formed by VP2 may allow the delivery of the viral genome through the host endosomal membrane. The chain is Minor capsid protein VP2 from Rabbit hemorrhagic disease virus (strain AST89) (Ra/LV/RHDV/AST89/1989/SP).